Reading from the N-terminus, the 146-residue chain is UPF0260 protein Sbal_1871 (146 aa).

This sequence belongs to the UPF0260 family.

The polypeptide is UPF0260 protein Sbal_1871 (Shewanella baltica (strain OS155 / ATCC BAA-1091)).